We begin with the raw amino-acid sequence, 119 residues long: DNA-binding protein MmarC7_1157 (119 aa).

Over residues 1–12 (MNPEEIRQRRLQ) the composition is skewed to basic and acidic residues. The disordered stretch occupies residues 1-37 (MNPEEIRQRRLQEMQAKAQEQGAANDPEAQRQAQEQQ).

It belongs to the PDCD5 family.

This Methanococcus maripaludis (strain C7 / ATCC BAA-1331) protein is DNA-binding protein MmarC7_1157.